Consider the following 144-residue polypeptide: Large ribosomal subunit protein uL15 (144 aa).

Positions 1-58 are disordered; the sequence is MKLNNLSPAPGSKHAEKRVGRGIGSGLGKTGGRGHKGQKSRSGGSVKPGFEGGQMPLQ. Positions 21–31 are enriched in gly residues; the sequence is RGIGSGLGKTG.

It belongs to the universal ribosomal protein uL15 family. As to quaternary structure, part of the 50S ribosomal subunit.

In terms of biological role, binds to the 23S rRNA. The chain is Large ribosomal subunit protein uL15 from Chromohalobacter salexigens (strain ATCC BAA-138 / DSM 3043 / CIP 106854 / NCIMB 13768 / 1H11).